The sequence spans 1231 residues: Protein FAM193A (1231 aa).

Residues 106–142 (CTEDMYSTLLQRYQRSEEELRKVAEEWLECQKRIDAY) are a coiled coil. Residues 249 to 272 (DYLSEMRPPSVSSASSGSGSSSPI) form a disordered region. A compositionally biased stretch (low complexity) spans 258–270 (SVSSASSGSGSSS). At Ser-293 the chain carries Phosphoserine. 5 disordered regions span residues 331 to 405 (NGGG…QAEQ), 633 to 703 (QSSS…APSF), 719 to 789 (SFCP…NQKE), 826 to 845 (LTKR…EREG), and 860 to 1174 (NSSE…SSLD). Positions 355–365 (EADDEDADGES) are enriched in acidic residues. Ser-648 carries the phosphoserine modification. Over residues 676–691 (LAPLPALSPSALSPAS) the composition is skewed to low complexity. Residues 761–773 (QQDDGDESADEDS) are compositionally biased toward acidic residues. Positions 776–785 (EHSSSTSTST) are enriched in low complexity. The segment covering 872–881 (AAKRARHKQR) has biased composition (basic residues). Positions 877-973 (RHKQRKLEEK…ATESISNSEN (97 aa)) form a coiled coil. The span at 882–909 (KLEEKARLEAEARAREHLHHQEEQKQRE) shows a compositional bias: basic and acidic residues. Over residues 910-920 (EEEDEEEEDEE) the composition is skewed to acidic residues. Residues 921-935 (QHFKEEFQRLQELQK) show a composition bias toward basic and acidic residues. Residues 937–946 (RAAKKKKKDR) show a composition bias toward basic residues. Over residues 962–979 (QAATESISNSENIHNGSL) the composition is skewed to polar residues. A phosphoserine mark is found at Ser-1136 and Ser-1151. Over residues 1156–1166 (GKNKKNKKKKG) the composition is skewed to basic residues.

This sequence belongs to the FAM193 family.

The sequence is that of Protein FAM193A (Fam193a) from Mus musculus (Mouse).